The primary structure comprises 76 residues: Virulence-associated protein VagC (76 aa).

Residues 4–45 form the SpoVT-AbrB domain; the sequence is VSIFKNGNNRAIRLPRDLDFEGVSELEIVREGDSIILRPVRP.

It belongs to the VapB family.

The sequence is that of Virulence-associated protein VagC (vagC) from Salmonella dublin.